Consider the following 450-residue polypeptide: 3-keto-steroid reductase erg27 (450 aa).

NADP(+) is bound by residues L25, T53, and K59. Active-site proton donor residues include S215 and Y238. NADP(+)-binding residues include Y238, K242, and T296. Catalysis depends on K242, which acts as the Lowers pKa of active site Tyr.

The protein belongs to the short-chain dehydrogenases/reductases (SDR) family. ERG27 subfamily. Heterotetramer of erg25, erg26, erg27 and erg28. Erg28 acts as a scaffold to tether erg27 and other 4,4-demethylation-related enzymes, forming a demethylation enzyme complex, in the endoplasmic reticulum.

It localises to the endoplasmic reticulum membrane. The protein resides in the lipid droplet. Its pathway is steroid metabolism; ergosterol biosynthesis. In terms of biological role, sterol-C4-methyl oxidase; part of the third module of ergosterol biosynthesis pathway that includes the late steps of the pathway. Erg27 is a catalytic component of the C-4 demethylation complex that catalyzes the conversion of 4,4-dimethylfecosterol into fecosterol via 4-methylfecosterol. The third module or late pathway involves the ergosterol synthesis itself through consecutive reactions that mainly occur in the endoplasmic reticulum (ER) membrane. Firstly, the squalene synthase erg9 catalyzes the condensation of 2 farnesyl pyrophosphate moieties to form squalene, which is the precursor of all steroids. Squalene synthase is crucial for balancing the incorporation of farnesyl diphosphate (FPP) into sterol and nonsterol isoprene synthesis. Secondly, squalene is converted into lanosterol by the consecutive action of the squalene epoxidase erg1 and the lanosterol synthase erg7. Then, the delta(24)-sterol C-methyltransferase erg6 methylates lanosterol at C-24 to produce eburicol. Eburicol is the substrate of the sterol 14-alpha demethylase encoded by cyp51A and cyp51B, to yield 4,4,24-trimethyl ergosta-8,14,24(28)-trienol. The C-14 reductase erg24 then reduces the C14=C15 double bond which leads to 4,4-dimethylfecosterol. A sequence of further demethylations at C-4, involving the C-4 demethylation complex containing the C-4 methylsterol oxidases erg25A or erg25B, the sterol-4-alpha-carboxylate 3-dehydrogenase erg26 and the 3-keto-steroid reductase erg27, leads to the production of fecosterol via 4-methylfecosterol. The C-8 sterol isomerase erg2 then catalyzes the reaction which results in unsaturation at C-7 in the B ring of sterols and thus converts fecosterol to episterol. The sterol-C5-desaturase erg3B then catalyzes the introduction of a C-5 double bond in the B ring to produce 5-dehydroepisterol. The 2 other sterol-C5-desaturases, erg3A and erg3C, seem to be less important in ergosterol biosynthesis. The C-22 sterol desaturase erg5 further converts 5-dehydroepisterol into ergosta-5,7,22,24(28)-tetraen-3beta-ol by forming the C-22(23) double bond in the sterol side chain. Finally, ergosta-5,7,22,24(28)-tetraen-3beta-ol is substrate of the C-24(28) sterol reductases erg4A and erg4B to produce ergosterol. Possible alternative sterol biosynthetic pathways might exist from fecosterol to ergosterol, depending on the activities of the erg3 isoforms. This is 3-keto-steroid reductase erg27 from Aspergillus fumigatus (strain ATCC MYA-4609 / CBS 101355 / FGSC A1100 / Af293) (Neosartorya fumigata).